The following is a 137-amino-acid chain: FAD synthase (137 aa).

ATP is bound by residues 5 to 6 (TF), 10 to 13 (HPGH), and Asp88.

It belongs to the archaeal FAD synthase family. Homodimer. A divalent metal cation is required as a cofactor.

The catalysed reaction is FMN + ATP + H(+) = FAD + diphosphate. Its pathway is cofactor biosynthesis; FAD biosynthesis; FAD from FMN: step 1/1. Catalyzes the transfer of the AMP portion of ATP to flavin mononucleotide (FMN) to produce flavin adenine dinucleotide (FAD) coenzyme. In Archaeoglobus fulgidus (strain ATCC 49558 / DSM 4304 / JCM 9628 / NBRC 100126 / VC-16), this protein is FAD synthase.